Consider the following 215-residue polypeptide: Urease accessory protein UreG (215 aa).

15–22 is a GTP binding site; the sequence is GPVGSGKT.

This sequence belongs to the SIMIBI class G3E GTPase family. UreG subfamily. In terms of assembly, homodimer. UreD, UreF and UreG form a complex that acts as a GTP-hydrolysis-dependent molecular chaperone, activating the urease apoprotein by helping to assemble the nickel containing metallocenter of UreC. The UreE protein probably delivers the nickel.

Its subcellular location is the cytoplasm. Facilitates the functional incorporation of the urease nickel metallocenter. This process requires GTP hydrolysis, probably effectuated by UreG. This Alcanivorax borkumensis (strain ATCC 700651 / DSM 11573 / NCIMB 13689 / SK2) protein is Urease accessory protein UreG.